The sequence spans 957 residues: Glycine dehydrogenase (decarboxylating) (957 aa).

Lys-708 bears the N6-(pyridoxal phosphate)lysine mark.

This sequence belongs to the GcvP family. The glycine cleavage system is composed of four proteins: P, T, L and H. Requires pyridoxal 5'-phosphate as cofactor.

It carries out the reaction N(6)-[(R)-lipoyl]-L-lysyl-[glycine-cleavage complex H protein] + glycine + H(+) = N(6)-[(R)-S(8)-aminomethyldihydrolipoyl]-L-lysyl-[glycine-cleavage complex H protein] + CO2. The glycine cleavage system catalyzes the degradation of glycine. The P protein binds the alpha-amino group of glycine through its pyridoxal phosphate cofactor; CO(2) is released and the remaining methylamine moiety is then transferred to the lipoamide cofactor of the H protein. The chain is Glycine dehydrogenase (decarboxylating) from Escherichia coli (strain UTI89 / UPEC).